Reading from the N-terminus, the 540-residue chain is IQ motif and ankyrin repeat domain-containing protein 1 (540 aa).

The span at 1–17 shows a compositional bias: low complexity; it reads MSTKKGGPKAASGKGQA. The segment at 1-62 is disordered; sequence MSTKKGGPKA…PQAPAAPTAE (62 aa). One can recognise an IQ domain in the interval 62 to 91; that stretch reads EDKAAIVIQCAFRQYLARRELARRCQERQE. ANK repeat units follow at residues 191-220 and 224-253; these read HGNTPLSEAAAGGQTMAIQLLAELGANPNT and FGRTPLYRAAFGGHLEAVEELLKIGADPRM. Residues 281–388 are a coiled coil; sequence LTEAMLKNME…EETLAMARLE (108 aa).

In Mus musculus (Mouse), this protein is IQ motif and ankyrin repeat domain-containing protein 1.